We begin with the raw amino-acid sequence, 196 residues long: Holliday junction branch migration complex subunit RuvA (196 aa).

The segment at 1–65 (MIGNLSGTVD…ENTTQLYGFI (65 aa)) is domain I. The segment at 66–143 (NKEEQSCLRL…KLETNNNNFY (78 aa)) is domain II. A flexible linker region spans residues 144-147 (PINE). The segment at 147–196 (EDAVSALINLGYEKTKVYDTIKKYKPNLDTKDIIRTALKELSNYEIDIMQ) is domain III.

It belongs to the RuvA family. In terms of assembly, homotetramer. Forms an RuvA(8)-RuvB(12)-Holliday junction (HJ) complex. HJ DNA is sandwiched between 2 RuvA tetramers; dsDNA enters through RuvA and exits via RuvB. An RuvB hexamer assembles on each DNA strand where it exits the tetramer. Each RuvB hexamer is contacted by two RuvA subunits (via domain III) on 2 adjacent RuvB subunits; this complex drives branch migration. In the full resolvosome a probable DNA-RuvA(4)-RuvB(12)-RuvC(2) complex forms which resolves the HJ.

The protein localises to the cytoplasm. The RuvA-RuvB-RuvC complex processes Holliday junction (HJ) DNA during genetic recombination and DNA repair, while the RuvA-RuvB complex plays an important role in the rescue of blocked DNA replication forks via replication fork reversal (RFR). RuvA specifically binds to HJ cruciform DNA, conferring on it an open structure. The RuvB hexamer acts as an ATP-dependent pump, pulling dsDNA into and through the RuvAB complex. HJ branch migration allows RuvC to scan DNA until it finds its consensus sequence, where it cleaves and resolves the cruciform DNA. In Wolbachia sp. subsp. Brugia malayi (strain TRS), this protein is Holliday junction branch migration complex subunit RuvA.